The sequence spans 457 residues: Tubulin alpha chain (457 aa).

Residues Q12, E77, S146, G150, T151, T186, N213, and N235 each coordinate GTP. Residue E77 coordinates Mg(2+).

This sequence belongs to the tubulin family. Dimer of alpha and beta chains. A typical microtubule is a hollow water-filled tube with an outer diameter of 25 nm and an inner diameter of 15 nM. Alpha-beta heterodimers associate head-to-tail to form protofilaments running lengthwise along the microtubule wall with the beta-tubulin subunit facing the microtubule plus end conferring a structural polarity. Microtubules usually have 13 protofilaments but different protofilament numbers can be found in some organisms and specialized cells. Requires Mg(2+) as cofactor. Post-translationally, undergoes a tyrosination/detyrosination cycle, the cyclic removal and re-addition of a C-terminal tyrosine residue by the enzymes tubulin tyrosine carboxypeptidase (TTCP) and tubulin tyrosine ligase (TTL), respectively.

The protein localises to the cytoplasm. It localises to the cytoskeleton. It carries out the reaction GTP + H2O = GDP + phosphate + H(+). Functionally, tubulin is the major constituent of microtubules, a cylinder consisting of laterally associated linear protofilaments composed of alpha- and beta-tubulin heterodimers. Microtubules grow by the addition of GTP-tubulin dimers to the microtubule end, where a stabilizing cap forms. Below the cap, tubulin dimers are in GDP-bound state, owing to GTPase activity of alpha-tubulin. The sequence is that of Tubulin alpha chain (tubA) from Dictyostelium discoideum (Social amoeba).